The primary structure comprises 202 residues: Nucleoside triphosphate pyrophosphatase (202 aa).

Asp79 serves as the catalytic Proton acceptor.

It belongs to the Maf family. A divalent metal cation serves as cofactor.

It is found in the cytoplasm. The enzyme catalyses a ribonucleoside 5'-triphosphate + H2O = a ribonucleoside 5'-phosphate + diphosphate + H(+). The catalysed reaction is a 2'-deoxyribonucleoside 5'-triphosphate + H2O = a 2'-deoxyribonucleoside 5'-phosphate + diphosphate + H(+). Functionally, nucleoside triphosphate pyrophosphatase. May have a dual role in cell division arrest and in preventing the incorporation of modified nucleotides into cellular nucleic acids. This chain is Nucleoside triphosphate pyrophosphatase, found in Nitrobacter winogradskyi (strain ATCC 25391 / DSM 10237 / CIP 104748 / NCIMB 11846 / Nb-255).